The primary structure comprises 301 residues: 4-hydroxy-tetrahydrodipicolinate synthase (301 aa).

T55 is a pyruvate binding site. Y143 functions as the Proton donor/acceptor in the catalytic mechanism. K171 serves as the catalytic Schiff-base intermediate with substrate. Residue I213 coordinates pyruvate.

The protein belongs to the DapA family. In terms of assembly, homotetramer; dimer of dimers.

The protein resides in the cytoplasm. The enzyme catalyses L-aspartate 4-semialdehyde + pyruvate = (2S,4S)-4-hydroxy-2,3,4,5-tetrahydrodipicolinate + H2O + H(+). It functions in the pathway amino-acid biosynthesis; L-lysine biosynthesis via DAP pathway; (S)-tetrahydrodipicolinate from L-aspartate: step 3/4. Catalyzes the condensation of (S)-aspartate-beta-semialdehyde [(S)-ASA] and pyruvate to 4-hydroxy-tetrahydrodipicolinate (HTPA). In Psychrobacter arcticus (strain DSM 17307 / VKM B-2377 / 273-4), this protein is 4-hydroxy-tetrahydrodipicolinate synthase.